The primary structure comprises 326 residues: Phospho-N-acetylmuramoyl-pentapeptide-transferase (326 aa).

Helical transmembrane passes span 3 to 23 (ISIS…PAFI), 51 to 71 (TMGG…VALF), 79 to 99 (VGMI…DDFL), 115 to 135 (LALQ…GGDM), 138 to 158 (IFGY…FWLV), 169 to 189 (GIDG…GVIA), 195 to 215 (MDIL…FVFN), 221 to 243 (VFMG…MALH), and 304 to 324 (VDFF…AILY).

The protein belongs to the glycosyltransferase 4 family. MraY subfamily. It depends on Mg(2+) as a cofactor.

Its subcellular location is the cell membrane. It carries out the reaction UDP-N-acetyl-alpha-D-muramoyl-L-alanyl-gamma-D-glutamyl-L-lysyl-D-alanyl-D-alanine + di-trans,octa-cis-undecaprenyl phosphate = Mur2Ac(oyl-L-Ala-gamma-D-Glu-L-Lys-D-Ala-D-Ala)-di-trans,octa-cis-undecaprenyl diphosphate + UMP. It functions in the pathway cell wall biogenesis; peptidoglycan biosynthesis. Its function is as follows. Catalyzes the initial step of the lipid cycle reactions in the biosynthesis of the cell wall peptidoglycan: transfers peptidoglycan precursor phospho-MurNAc-pentapeptide from UDP-MurNAc-pentapeptide onto the lipid carrier undecaprenyl phosphate, yielding undecaprenyl-pyrophosphoryl-MurNAc-pentapeptide, known as lipid I. The protein is Phospho-N-acetylmuramoyl-pentapeptide-transferase of Streptococcus pneumoniae (strain Hungary19A-6).